We begin with the raw amino-acid sequence, 414 residues long: Serine hydroxymethyltransferase (414 aa).

Residues L121 and 125-127 (GHL) each bind (6S)-5,6,7,8-tetrahydrofolate. N6-(pyridoxal phosphate)lysine is present on K229.

The protein belongs to the SHMT family. As to quaternary structure, homodimer. Requires pyridoxal 5'-phosphate as cofactor.

The protein resides in the cytoplasm. The enzyme catalyses (6R)-5,10-methylene-5,6,7,8-tetrahydrofolate + glycine + H2O = (6S)-5,6,7,8-tetrahydrofolate + L-serine. Its pathway is one-carbon metabolism; tetrahydrofolate interconversion. It participates in amino-acid biosynthesis; glycine biosynthesis; glycine from L-serine: step 1/1. Functionally, catalyzes the reversible interconversion of serine and glycine with tetrahydrofolate (THF) serving as the one-carbon carrier. This reaction serves as the major source of one-carbon groups required for the biosynthesis of purines, thymidylate, methionine, and other important biomolecules. Also exhibits THF-independent aldolase activity toward beta-hydroxyamino acids, producing glycine and aldehydes, via a retro-aldol mechanism. In Herminiimonas arsenicoxydans, this protein is Serine hydroxymethyltransferase.